The following is a 221-amino-acid chain: Ribosomal RNA large subunit methyltransferase E (221 aa).

S-adenosyl-L-methionine contacts are provided by Gly60, Trp62, Asp89, Asp105, and Asp134. The active-site Proton acceptor is the Lys174.

The protein belongs to the class I-like SAM-binding methyltransferase superfamily. RNA methyltransferase RlmE family.

It localises to the cytoplasm. It catalyses the reaction uridine(2552) in 23S rRNA + S-adenosyl-L-methionine = 2'-O-methyluridine(2552) in 23S rRNA + S-adenosyl-L-homocysteine + H(+). In terms of biological role, specifically methylates the uridine in position 2552 of 23S rRNA at the 2'-O position of the ribose in the fully assembled 50S ribosomal subunit. The polypeptide is Ribosomal RNA large subunit methyltransferase E (Cupriavidus necator (strain ATCC 17699 / DSM 428 / KCTC 22496 / NCIMB 10442 / H16 / Stanier 337) (Ralstonia eutropha)).